Here is a 66-residue protein sequence, read N- to C-terminus: Large ribosomal subunit protein bL31 (66 aa).

Zn(2+) contacts are provided by cysteine 16, cysteine 18, cysteine 36, and cysteine 39.

Belongs to the bacterial ribosomal protein bL31 family. Type A subfamily. As to quaternary structure, part of the 50S ribosomal subunit. Requires Zn(2+) as cofactor.

In terms of biological role, binds the 23S rRNA. The polypeptide is Large ribosomal subunit protein bL31 (Pelobacter propionicus (strain DSM 2379 / NBRC 103807 / OttBd1)).